The sequence spans 141 residues: Putative nickel-responsive regulator (141 aa).

His-80, His-91, His-93, and Cys-99 together coordinate Ni(2+).

It belongs to the transcriptional regulatory CopG/NikR family. Ni(2+) serves as cofactor.

Its function is as follows. Transcriptional regulator. This chain is Putative nickel-responsive regulator, found in Methanococcus vannielii (strain ATCC 35089 / DSM 1224 / JCM 13029 / OCM 148 / SB).